We begin with the raw amino-acid sequence, 263 residues long: Hemophilin (263 aa).

An N-terminal signal peptide occupies residues 1–20 (MKISQLFLGLVACSTAFAYA). The heme b site is built by His-42, Tyr-58, Ser-104, and His-105.

As to quaternary structure, monomer in solution. Interacts with host hemoglobin.

The protein resides in the secreted. In terms of biological role, part of a high affinity heme acquisition system. Functions as a hemophore that acquires heme from human hemoglobin and delivers the heme to its cognate receptor, HphR, facilitating transport of heme across the bacterial outer membrane. Apo HphA interacts specifically with human hemoglobin and steals heme through a passive process probably due to its high affinity for heme. It can also acquire heme complexed to human serum albumin. Plays a supporting role for full virulence, acting as an accessory factor that enhances the process of heme uptake. This chain is Hemophilin, found in Acinetobacter baumannii.